The primary structure comprises 210 residues: Putative O-methyltransferase MSMEG_5073/MSMEI_4947 (210 aa).

S-adenosyl-L-methionine is bound by residues Val-37, Glu-59, 61–62 (GT), Ser-67, Asp-85, and Val-86. Asp-133 is a substrate binding site. Asp-135 contacts S-adenosyl-L-methionine.

This sequence belongs to the class I-like SAM-binding methyltransferase superfamily. Cation-dependent O-methyltransferase family.

This Mycolicibacterium smegmatis (strain ATCC 700084 / mc(2)155) (Mycobacterium smegmatis) protein is Putative O-methyltransferase MSMEG_5073/MSMEI_4947.